The primary structure comprises 87 residues: Putative sodium channel toxin Ts40 (87 aa).

Residues 1–19 form the signal peptide; it reads MTALFYLLFLTSVIIETHQ. 3 disulfide bridges follow: Cys-41–Cys-63, Cys-47–Cys-68, and Cys-51–Cys-70.

Belongs to the long (4 C-C) scorpion toxin superfamily. Sodium channel inhibitor family. Expressed by the venom gland.

The protein resides in the secreted. Functionally, putative sodium channel toxin. This is Putative sodium channel toxin Ts40 from Tityus serrulatus (Brazilian scorpion).